A 197-amino-acid polypeptide reads, in one-letter code: Small ribosomal subunit protein uS5 (197 aa).

Residues 1 to 27 (MAEREQRGGRDQRGGGRERKEREERDS) form a disordered region. The 64-residue stretch at 29–92 (FVDKLVHINR…ESAKRNLTRV (64 aa)) folds into the S5 DRBM domain.

It belongs to the universal ribosomal protein uS5 family. As to quaternary structure, part of the 30S ribosomal subunit. Contacts proteins S4 and S8.

Functionally, with S4 and S12 plays an important role in translational accuracy. Its function is as follows. Located at the back of the 30S subunit body where it stabilizes the conformation of the head with respect to the body. The sequence is that of Small ribosomal subunit protein uS5 from Bradyrhizobium diazoefficiens (strain JCM 10833 / BCRC 13528 / IAM 13628 / NBRC 14792 / USDA 110).